Consider the following 156-residue polypeptide: Ribosome maturation factor RimP (156 aa).

This sequence belongs to the RimP family.

Its subcellular location is the cytoplasm. Its function is as follows. Required for maturation of 30S ribosomal subunits. The sequence is that of Ribosome maturation factor RimP from Treponema pallidum (strain Nichols).